A 29-amino-acid polypeptide reads, in one-letter code: Glucagon (29 aa).

This sequence belongs to the glucagon family.

The protein localises to the secreted. Glucagon plays a key role in glucose metabolism and homeostasis. Regulates blood glucose by increasing gluconeogenesis and decreasing glycolysis. The chain is Glucagon (gcg) from Polypterus senegalus (Senegal bichir).